Here is a 356-residue protein sequence, read N- to C-terminus: MTTTLQQRESVSLWEQFCQWVTSTNNRIYVGWFGTLMIPTLLTATTCFIIAFIAAPPVDIDGIREPVAGSLLYGNNIVSGAVVPSSNAIGLHFYPIWEAASLDEWLYNGGPYQLVIFHFLIGIFCYMGRQWELSYRLGMRPWICVAYSAPVSAATAVFLIYPIGQGSFSDGMPLGISGTFNFMFVFQAEHNILMHPFHMLGVAGVFGGSLFSAMHGSLVTSSLVRETTEIESQNYGYKFGQEEETYNIVAAHGYFGRLIFQYASFNNSRALHFFLGAWPVIGIWFTAMGVSTMAFNLNGFNFNQSILDSQGRVIGTWADVLNRAGIGMEVMHERNAHNFPLDLASAEPVSAPVING.

3 helical membrane-spanning segments follow: residues 29–46 (YVGWFGTLMIPTLLTATT), 118–133 (HFLIGIFCYMGRQWEL), and 142–156 (WICVAYSAPVSAATA). H118 provides a ligand contact to chlorophyll a. Y126 contacts pheophytin a. 2 residues coordinate [CaMn4O5] cluster: D170 and E189. Residues 197–218 (FHMLGVAGVFGGSLFSAMHGSL) form a helical membrane-spanning segment. H198 is a chlorophyll a binding site. Residues H215 and 264–265 (SF) contribute to the a quinone site. H215 lines the Fe cation pocket. Position 272 (H272) interacts with Fe cation. Residues 274 to 288 (FLGAWPVIGIWFTAM) traverse the membrane as a helical segment. [CaMn4O5] cluster-binding residues include H332, E333, D342, and A344. The propeptide occupies 345 to 356 (SAEPVSAPVING).

It belongs to the reaction center PufL/M/PsbA/D family. PSII is composed of 1 copy each of membrane proteins PsbA, PsbB, PsbC, PsbD, PsbE, PsbF, PsbH, PsbI, PsbJ, PsbK, PsbL, PsbM, PsbT, PsbX, PsbY, PsbZ, Psb30/Ycf12, peripheral proteins PsbO, CyanoQ (PsbQ), PsbU, PsbV and a large number of cofactors. It forms dimeric complexes. It depends on The D1/D2 heterodimer binds P680, chlorophylls that are the primary electron donor of PSII, and subsequent electron acceptors. It shares a non-heme iron and each subunit binds pheophytin, quinone, additional chlorophylls, carotenoids and lipids. D1 provides most of the ligands for the Mn4-Ca-O5 cluster of the oxygen-evolving complex (OEC). There is also a Cl(-1) ion associated with D1 and D2, which is required for oxygen evolution. The PSII complex binds additional chlorophylls, carotenoids and specific lipids. as a cofactor. Post-translationally, tyr-161 forms a radical intermediate that is referred to as redox-active TyrZ, YZ or Y-Z. In terms of processing, C-terminally processed by CtpA; processing is essential to allow assembly of the oxygen-evolving complex and thus photosynthetic growth.

Its subcellular location is the cellular thylakoid membrane. The enzyme catalyses 2 a plastoquinone + 4 hnu + 2 H2O = 2 a plastoquinol + O2. Photosystem II (PSII) is a light-driven water:plastoquinone oxidoreductase that uses light energy to abstract electrons from H(2)O, generating O(2) and a proton gradient subsequently used for ATP formation. It consists of a core antenna complex that captures photons, and an electron transfer chain that converts photonic excitation into a charge separation. The D1/D2 (PsbA/PsbD) reaction center heterodimer binds P680, the primary electron donor of PSII as well as several subsequent electron acceptors. The protein is Photosystem II protein D1 of Crocosphaera subtropica (strain ATCC 51142 / BH68) (Cyanothece sp. (strain ATCC 51142)).